A 607-amino-acid polypeptide reads, in one-letter code: Elongation factor 4 (607 aa).

The 183-residue stretch at Lys-11–Ser-193 folds into the tr-type G domain. GTP-binding positions include Asp-23–Thr-28 and Asn-140–Asp-143.

This sequence belongs to the TRAFAC class translation factor GTPase superfamily. Classic translation factor GTPase family. LepA subfamily.

It localises to the cell membrane. The catalysed reaction is GTP + H2O = GDP + phosphate + H(+). Required for accurate and efficient protein synthesis under certain stress conditions. May act as a fidelity factor of the translation reaction, by catalyzing a one-codon backward translocation of tRNAs on improperly translocated ribosomes. Back-translocation proceeds from a post-translocation (POST) complex to a pre-translocation (PRE) complex, thus giving elongation factor G a second chance to translocate the tRNAs correctly. Binds to ribosomes in a GTP-dependent manner. In Staphylococcus carnosus (strain TM300), this protein is Elongation factor 4.